The chain runs to 284 residues: Bifunctional protein FolD (284 aa).

NADP(+) contacts are provided by residues Gly-165–Ser-167, Ile-190, and Ile-231.

This sequence belongs to the tetrahydrofolate dehydrogenase/cyclohydrolase family. As to quaternary structure, homodimer.

The catalysed reaction is (6R)-5,10-methylene-5,6,7,8-tetrahydrofolate + NADP(+) = (6R)-5,10-methenyltetrahydrofolate + NADPH. The enzyme catalyses (6R)-5,10-methenyltetrahydrofolate + H2O = (6R)-10-formyltetrahydrofolate + H(+). It participates in one-carbon metabolism; tetrahydrofolate interconversion. Functionally, catalyzes the oxidation of 5,10-methylenetetrahydrofolate to 5,10-methenyltetrahydrofolate and then the hydrolysis of 5,10-methenyltetrahydrofolate to 10-formyltetrahydrofolate. The protein is Bifunctional protein FolD of Alkaliphilus metalliredigens (strain QYMF).